Consider the following 160-residue polypeptide: SsrA-binding protein (160 aa).

The protein belongs to the SmpB family.

It is found in the cytoplasm. Functionally, required for rescue of stalled ribosomes mediated by trans-translation. Binds to transfer-messenger RNA (tmRNA), required for stable association of tmRNA with ribosomes. tmRNA and SmpB together mimic tRNA shape, replacing the anticodon stem-loop with SmpB. tmRNA is encoded by the ssrA gene; the 2 termini fold to resemble tRNA(Ala) and it encodes a 'tag peptide', a short internal open reading frame. During trans-translation Ala-aminoacylated tmRNA acts like a tRNA, entering the A-site of stalled ribosomes, displacing the stalled mRNA. The ribosome then switches to translate the ORF on the tmRNA; the nascent peptide is terminated with the 'tag peptide' encoded by the tmRNA and targeted for degradation. The ribosome is freed to recommence translation, which seems to be the essential function of trans-translation. This chain is SsrA-binding protein, found in Dinoroseobacter shibae (strain DSM 16493 / NCIMB 14021 / DFL 12).